The chain runs to 347 residues: MESPAASPPASLPQTKGKSKRKKDLRISCVSKPPVSNPTPPRNLDSRTFITIGDRNFEVEADDLVTISELGRGAYGVVEKVRHAQSGTIMAVKRIRATVNTQEQKRLLMDLDINMRTVDCFYTVTFYGALFREGDVWICMELMDTSLDKFYRKVLEKNMKIPEDILGEIAVSIVRALEHLHSKLSVIHRDVKPSNVLINKEGHVKMCDFGISGYLVDSVAKTMDAGCKPYMAPERINPELNQKGYNVKSDVWSLGITMIEMAILRFPYESWGTPFQQLKQVVEEPSPQLPADQFSPEFVDFTSQCLRKNPAERMSYLELMEHPFFTLHKTKKTDIAAFVKEILGEDS.

Position 1 is an N-acetylmethionine (methionine 1). Pro residues predominate over residues 1–11; sequence MESPAASPPAS. The disordered stretch occupies residues 1–45; it reads MESPAASPPASLPQTKGKSKRKKDLRISCVSKPPVSNPTPPRNLD. The residue at position 3 (serine 3) is a Phosphoserine. The Protein kinase domain maps to 64 to 325; it reads LVTISELGRG…YLELMEHPFF (262 aa). ATP contacts are provided by residues 70–78 and lysine 93; that span reads LGRGAYGVV. Residue aspartate 190 is the Proton acceptor of the active site. Serine 218 is modified (phosphoserine). Threonine 222 carries the phosphothreonine modification.

Belongs to the protein kinase superfamily. STE Ser/Thr protein kinase family. MAP kinase kinase subfamily. As to quaternary structure, component of a signaling complex containing at least AKAP13, PKN1, MAPK14, ZAK and MAP2K3. Within this complex, AKAP13 interacts directly with PKN1, which in turn recruits MAPK14, MAP2K3 and ZAK. Binds to DYRK1B/MIRK and increases its kinase activity. Part of a complex with MAP3K3, RAC1 and CCM2. Interacts with ARRB1. Post-translationally, autophosphorylated. Phosphorylation on Ser-218 and Thr-222 by MAP kinase kinase kinases positively regulates the kinase activity. Phosphorylated by TAOK2.

It carries out the reaction L-seryl-[protein] + ATP = O-phospho-L-seryl-[protein] + ADP + H(+). The catalysed reaction is L-threonyl-[protein] + ATP = O-phospho-L-threonyl-[protein] + ADP + H(+). It catalyses the reaction L-tyrosyl-[protein] + ATP = O-phospho-L-tyrosyl-[protein] + ADP + H(+). Its activity is regulated as follows. Activated by dual phosphorylation on Ser-218 and Thr-222. Functionally, dual specificity kinase. Is activated by cytokines and environmental stress in vivo. Catalyzes the concomitant phosphorylation of a threonine and a tyrosine residue in the MAP kinase p38. Part of a signaling cascade that begins with the activation of the adrenergic receptor ADRA1B and leads to the activation of MAPK14. The chain is Dual specificity mitogen-activated protein kinase kinase 3 (Map2k3) from Mus musculus (Mouse).